The primary structure comprises 527 residues: Peptide chain release factor 3 (527 aa).

The region spanning 9–277 (AKRRTFAIIS…AVVDWAPRPL (269 aa)) is the tr-type G domain. GTP contacts are provided by residues 18 to 25 (SHPDAGKT), 86 to 90 (DTPGH), and 140 to 143 (NKLD).

The protein belongs to the TRAFAC class translation factor GTPase superfamily. Classic translation factor GTPase family. PrfC subfamily.

It localises to the cytoplasm. Increases the formation of ribosomal termination complexes and stimulates activities of RF-1 and RF-2. It binds guanine nucleotides and has strong preference for UGA stop codons. It may interact directly with the ribosome. The stimulation of RF-1 and RF-2 is significantly reduced by GTP and GDP, but not by GMP. This chain is Peptide chain release factor 3, found in Pseudomonas entomophila (strain L48).